The following is a 467-amino-acid chain: MKKHIFEDIILQNALNFTREMMNVFEDLLKNGMNITELVARIKELTDKLGREAIEAIIEELDRIIKEDKRRKEKWVVERKDKKRLTTVLGDIEYERTYYKSREDGRYTYLVDDALEIGRHERIEKGVKIKLVENAIEESYEKSSEKACPEKISKQTVLNAIREIGEVEVKREIKEKKEVRVLYIEADEDHVPLQDGSSETPRLIYIHEGREEKNGRNVLKNVYYKAYVGEKAEDIWIDVANYIEENYKEEKIEKIYIAGDGAPWIKEGLEWIVKSRFVLDRYHLNKYVLKATSKEPKYRDKIWRAINEGDKEGVKKIFGELIKIAKEEKEKEKIKEAKRYILNNWEGIKIYSEDEDVIGCSAEGHISHVFSARLSRNPLGWSREGLKLMAKLRVFSKNGGDLREVEWGKKKNINAGSYKLTEKQIKEAVRRVKTSTNEKINNITVLNIGKVTPIYRVLRALKYAQVI.

Belongs to the UPF0236 family.

The polypeptide is UPF0236 protein TTE0033/TTE0744/TTE0838/TTE0852/TTE1082/TTE1247/TTE1519/TTE1678/TTE1739/TTE1823/TTE2212 (Caldanaerobacter subterraneus subsp. tengcongensis (strain DSM 15242 / JCM 11007 / NBRC 100824 / MB4) (Thermoanaerobacter tengcongensis)).